Consider the following 422-residue polypeptide: Mitogen-activated protein kinase spm1 (422 aa).

A Protein kinase domain is found at 21–314 (FKVVKELGQG…VDDALEHPYL (294 aa)). ATP contacts are provided by residues 27–35 (LGQGAYGIV) and lysine 52. Aspartate 149 acts as the Proton acceptor in catalysis. Threonine 186 is subject to Phosphothreonine. The TXY motif lies at 186–188 (TEY). At tyrosine 188 the chain carries Phosphotyrosine. The segment at 359-422 (RRRSHPTNPT…DHKSDDNRHN (64 aa)) is disordered. The segment covering 364-379 (PTNPTVNIPQPAQTVP) has biased composition (polar residues). The segment covering 380–397 (SNDNGSFNVSSSSSSQTS) has biased composition (low complexity). Basic and acidic residues predominate over residues 411 to 422 (AIDHKSDDNRHN).

The protein belongs to the protein kinase superfamily. CMGC Ser/Thr protein kinase family. MAP kinase subfamily. It depends on Mg(2+) as a cofactor. Dually phosphorylated on Thr-186 and Tyr-188, which activates the enzyme.

It carries out the reaction L-seryl-[protein] + ATP = O-phospho-L-seryl-[protein] + ADP + H(+). The enzyme catalyses L-threonyl-[protein] + ATP = O-phospho-L-threonyl-[protein] + ADP + H(+). Activated by tyrosine and threonine phosphorylation by skh1/pek1. Functionally, regulates cell integrity and functions coordinately with the protein kinase C pathway (pck1 and pck2). Involved the regulation of wall architecture, cell shape, cytokinesis in exponential and stationary phase, and metabolism of ions. This is Mitogen-activated protein kinase spm1 (spm1) from Schizosaccharomyces pombe (strain 972 / ATCC 24843) (Fission yeast).